We begin with the raw amino-acid sequence, 59 residues long: Embryonic testis differentiation protein homolog A (59 aa).

Positions 1–10 (MDKEVPKGSP) are enriched in basic and acidic residues. Positions 1 to 25 (MDKEVPKGSPREPALNIKKSDKSFK) are disordered.

The sequence is that of Embryonic testis differentiation protein homolog A from Homo sapiens (Human).